The chain runs to 310 residues: Aspartate carbamoyltransferase catalytic subunit 2 (310 aa).

Carbamoyl phosphate-binding residues include Arg55 and Thr56. L-aspartate is bound at residue Lys85. Positions 106, 134, and 137 each coordinate carbamoyl phosphate. L-aspartate contacts are provided by Arg167 and Arg228. Carbamoyl phosphate contacts are provided by Leu266 and Pro267.

This sequence belongs to the aspartate/ornithine carbamoyltransferase superfamily. ATCase family. In terms of assembly, heterododecamer (2C3:3R2) of six catalytic PyrB chains organized as two trimers (C3), and six regulatory PyrI chains organized as three dimers (R2).

It carries out the reaction carbamoyl phosphate + L-aspartate = N-carbamoyl-L-aspartate + phosphate + H(+). It functions in the pathway pyrimidine metabolism; UMP biosynthesis via de novo pathway; (S)-dihydroorotate from bicarbonate: step 2/3. In terms of biological role, catalyzes the condensation of carbamoyl phosphate and aspartate to form carbamoyl aspartate and inorganic phosphate, the committed step in the de novo pyrimidine nucleotide biosynthesis pathway. This is Aspartate carbamoyltransferase catalytic subunit 2 from Shewanella halifaxensis (strain HAW-EB4).